The primary structure comprises 360 residues: NAD(P)H-quinone oxidoreductase subunit 1, chloroplastic (360 aa).

8 consecutive transmembrane segments (helical) span residues 27–47 (VWIF…VLVI), 98–118 (FSIG…VIPF), 129–149 (IGIF…LMSG), 165–185 (AAQS…ISLL), 203–223 (FWGW…ISSL), 253–273 (FGLF…FVTI), 297–317 (VFGT…VLVI), and 340–360 (FLLP…LLSL).

Belongs to the complex I subunit 1 family. NDH is composed of at least 16 different subunits, 5 of which are encoded in the nucleus.

The protein localises to the plastid. It localises to the chloroplast thylakoid membrane. It carries out the reaction a plastoquinone + NADH + (n+1) H(+)(in) = a plastoquinol + NAD(+) + n H(+)(out). It catalyses the reaction a plastoquinone + NADPH + (n+1) H(+)(in) = a plastoquinol + NADP(+) + n H(+)(out). Functionally, NDH shuttles electrons from NAD(P)H:plastoquinone, via FMN and iron-sulfur (Fe-S) centers, to quinones in the photosynthetic chain and possibly in a chloroplast respiratory chain. The immediate electron acceptor for the enzyme in this species is believed to be plastoquinone. Couples the redox reaction to proton translocation, and thus conserves the redox energy in a proton gradient. This is NAD(P)H-quinone oxidoreductase subunit 1, chloroplastic from Draba nemorosa (Woodland whitlowgrass).